Here is a 228-residue protein sequence, read N- to C-terminus: tRNA (guanine-N(1)-)-methyltransferase (228 aa).

S-adenosyl-L-methionine contacts are provided by residues Gly-111 and 130 to 135 (IGDFVL).

The protein belongs to the RNA methyltransferase TrmD family. In terms of assembly, homodimer.

Its subcellular location is the cytoplasm. The enzyme catalyses guanosine(37) in tRNA + S-adenosyl-L-methionine = N(1)-methylguanosine(37) in tRNA + S-adenosyl-L-homocysteine + H(+). Functionally, specifically methylates guanosine-37 in various tRNAs. The sequence is that of tRNA (guanine-N(1)-)-methyltransferase from Ureaplasma urealyticum serovar 10 (strain ATCC 33699 / Western).